We begin with the raw amino-acid sequence, 307 residues long: D-alanine--D-alanine ligase (307 aa).

An ATP-grasp domain is found at 104–301 (RTAFLAAGLP…FVSLCRWMVE (198 aa)). 130 to 183 (PLPRPFVIKPANEGSAVGVHILHEGDNRRTEIARSWSFGGQALVEEYIPGRELT) is a binding site for ATP. Residues Asp-251, Glu-268, and Asn-270 each contribute to the Mg(2+) site.

Belongs to the D-alanine--D-alanine ligase family. Requires Mg(2+) as cofactor. Mn(2+) is required as a cofactor.

The protein resides in the cytoplasm. It carries out the reaction 2 D-alanine + ATP = D-alanyl-D-alanine + ADP + phosphate + H(+). It participates in cell wall biogenesis; peptidoglycan biosynthesis. Its function is as follows. Cell wall formation. This chain is D-alanine--D-alanine ligase, found in Granulibacter bethesdensis (strain ATCC BAA-1260 / CGDNIH1).